Consider the following 431-residue polypeptide: Histidinol dehydrogenase (431 aa).

NAD(+)-binding residues include tyrosine 127, glutamine 189, and asparagine 212. Positions 237, 259, and 262 each coordinate substrate. Glutamine 259 and histidine 262 together coordinate Zn(2+). Catalysis depends on proton acceptor residues glutamate 326 and histidine 327. The substrate site is built by histidine 327, aspartate 360, glutamate 414, and histidine 419. Aspartate 360 lines the Zn(2+) pocket. Histidine 419 contributes to the Zn(2+) binding site.

It belongs to the histidinol dehydrogenase family. The cofactor is Zn(2+).

It catalyses the reaction L-histidinol + 2 NAD(+) + H2O = L-histidine + 2 NADH + 3 H(+). Its pathway is amino-acid biosynthesis; L-histidine biosynthesis; L-histidine from 5-phospho-alpha-D-ribose 1-diphosphate: step 9/9. Functionally, catalyzes the sequential NAD-dependent oxidations of L-histidinol to L-histidinaldehyde and then to L-histidine. In Xanthomonas campestris pv. campestris (strain ATCC 33913 / DSM 3586 / NCPPB 528 / LMG 568 / P 25), this protein is Histidinol dehydrogenase.